The sequence spans 444 residues: Phosphoglucosamine mutase (444 aa).

The Phosphoserine intermediate role is filled by serine 102. The Mg(2+) site is built by serine 102, aspartate 239, aspartate 241, and aspartate 243. Position 102 is a phosphoserine (serine 102).

The protein belongs to the phosphohexose mutase family. The cofactor is Mg(2+). Activated by phosphorylation.

The enzyme catalyses alpha-D-glucosamine 1-phosphate = D-glucosamine 6-phosphate. In terms of biological role, catalyzes the conversion of glucosamine-6-phosphate to glucosamine-1-phosphate. In Mycolicibacterium paratuberculosis (strain ATCC BAA-968 / K-10) (Mycobacterium paratuberculosis), this protein is Phosphoglucosamine mutase.